The primary structure comprises 421 residues: 4-hydroxy-3-methylbut-2-en-1-yl diphosphate synthase (flavodoxin) (421 aa).

The [4Fe-4S] cluster site is built by Cys-311, Cys-314, Cys-357, and Glu-364.

The protein belongs to the IspG family. [4Fe-4S] cluster serves as cofactor.

It catalyses the reaction (2E)-4-hydroxy-3-methylbut-2-enyl diphosphate + oxidized [flavodoxin] + H2O + 2 H(+) = 2-C-methyl-D-erythritol 2,4-cyclic diphosphate + reduced [flavodoxin]. It functions in the pathway isoprenoid biosynthesis; isopentenyl diphosphate biosynthesis via DXP pathway; isopentenyl diphosphate from 1-deoxy-D-xylulose 5-phosphate: step 5/6. Its function is as follows. Converts 2C-methyl-D-erythritol 2,4-cyclodiphosphate (ME-2,4cPP) into 1-hydroxy-2-methyl-2-(E)-butenyl 4-diphosphate. This is 4-hydroxy-3-methylbut-2-en-1-yl diphosphate synthase (flavodoxin) from Xanthomonas campestris pv. campestris (strain 8004).